The sequence spans 239 residues: Geranylgeranylglyceryl phosphate synthase (239 aa).

The Mg(2+) site is built by Asp-19 and Ser-48. Sn-glycerol 1-phosphate contacts are provided by residues 167-173, 197-198, and 219-220; these read YLEAGSG, GG, and GT.

It belongs to the GGGP/HepGP synthase family. Group II subfamily. It depends on Mg(2+) as a cofactor.

It is found in the cytoplasm. It catalyses the reaction sn-glycerol 1-phosphate + (2E,6E,10E)-geranylgeranyl diphosphate = sn-3-O-(geranylgeranyl)glycerol 1-phosphate + diphosphate. It functions in the pathway membrane lipid metabolism; glycerophospholipid metabolism. Functionally, prenyltransferase that catalyzes the transfer of the geranylgeranyl moiety of geranylgeranyl diphosphate (GGPP) to the C3 hydroxyl of sn-glycerol-1-phosphate (G1P). This reaction is the first ether-bond-formation step in the biosynthesis of archaeal membrane lipids. The chain is Geranylgeranylglyceryl phosphate synthase from Methanopyrus kandleri (strain AV19 / DSM 6324 / JCM 9639 / NBRC 100938).